The sequence spans 397 residues: Formate-dependent phosphoribosylglycinamide formyltransferase (397 aa).

Residues 21–22 (EL) and Glu-81 each bind N(1)-(5-phospho-beta-D-ribosyl)glycinamide. Residues Arg-113, Lys-154, 194-197 (EEFV), and Glu-202 each bind ATP. In terms of domain architecture, ATP-grasp spans 118-312 (RFAAEKLKLP…EFQIHVRSAI (195 aa)). Glu-271 and Glu-283 together coordinate Mg(2+). N(1)-(5-phospho-beta-D-ribosyl)glycinamide-binding positions include Asp-290, Lys-361, and 368 to 369 (RR).

Belongs to the PurK/PurT family. As to quaternary structure, homodimer.

The catalysed reaction is N(1)-(5-phospho-beta-D-ribosyl)glycinamide + formate + ATP = N(2)-formyl-N(1)-(5-phospho-beta-D-ribosyl)glycinamide + ADP + phosphate + H(+). It functions in the pathway purine metabolism; IMP biosynthesis via de novo pathway; N(2)-formyl-N(1)-(5-phospho-D-ribosyl)glycinamide from N(1)-(5-phospho-D-ribosyl)glycinamide (formate route): step 1/1. Its function is as follows. Involved in the de novo purine biosynthesis. Catalyzes the transfer of formate to 5-phospho-ribosyl-glycinamide (GAR), producing 5-phospho-ribosyl-N-formylglycinamide (FGAR). Formate is provided by PurU via hydrolysis of 10-formyl-tetrahydrofolate. The protein is Formate-dependent phosphoribosylglycinamide formyltransferase of Saccharolobus solfataricus (strain ATCC 35092 / DSM 1617 / JCM 11322 / P2) (Sulfolobus solfataricus).